We begin with the raw amino-acid sequence, 263 residues long: MRNFFTLFFAAIFSLGALILAIVACAGSTKNYSPINKIYCAELDLSQMKVSTVLPSLSSATLSSLGLPSYINIGLWSYCTVDSSHNIQSCSSPHGIQNFNLSSLVYDNINNNEALELMDSVASVVLPEKLKSKMTYYNNLVKCMFITILIGIVLTFVNLVFNVLRWIIHIRPLTWFGAFFSFFAFAALLVSIGSCLGTYSYIKYILKHNYSDYGISMSIGRNYQGLMWGAVVGALLNFILWCSVRSRPTVIYANAPIEEKPLI.

Residues 1 to 6 (MRNFFT) lie on the Cytoplasmic side of the membrane. The chain crosses the membrane as a helical span at residues 7 to 27 (LFFAAIFSLGALILAIVACAG). The Extracellular portion of the chain corresponds to 28-143 (STKNYSPINK…MTYYNNLVKC (116 aa)). A glycan (N-linked (GlcNAc...) asparagine) is linked at Asn100. The helical transmembrane segment at 144 to 164 (MFITILIGIVLTFVNLVFNVL) threads the bilayer. Topologically, residues 165-172 (RWIIHIRP) are cytoplasmic. The chain crosses the membrane as a helical span at residues 173 to 193 (LTWFGAFFSFFAFAALLVSIG). Over 194 to 223 (SCLGTYSYIKYILKHNYSDYGISMSIGRNY) the chain is Extracellular. Asn209 carries N-linked (GlcNAc...) asparagine glycosylation. A helical membrane pass occupies residues 224-244 (QGLMWGAVVGALLNFILWCSV). Topologically, residues 245 to 263 (RSRPTVIYANAPIEEKPLI) are cytoplasmic. Lys260 participates in a covalent cross-link: Glycyl lysine isopeptide (Lys-Gly) (interchain with G-Cter in ubiquitin).

This sequence belongs to the SUR7 family. Post-translationally, N-glycosylated.

It localises to the cell membrane. Functionally, contributes to the wild-type cellular response to nitrogen stress through signaling pathways that regulate the expression of genes involved in amino acid biosynthesis. Required for wild-type filamentous growth, cell growth, and cell-cell adhesion. The chain is Protein PUN1 (PUN1) from Saccharomyces cerevisiae (strain ATCC 204508 / S288c) (Baker's yeast).